We begin with the raw amino-acid sequence, 329 residues long: Beta-ketoacyl-[acyl-carrier-protein] synthase III (329 aa).

Catalysis depends on residues C113 and H255. The ACP-binding stretch occupies residues 256 to 260 (QANQR). Residue N285 is part of the active site.

Belongs to the thiolase-like superfamily. FabH family. As to quaternary structure, homodimer.

The protein resides in the cytoplasm. It carries out the reaction malonyl-[ACP] + acetyl-CoA + H(+) = 3-oxobutanoyl-[ACP] + CO2 + CoA. The protein operates within lipid metabolism; fatty acid biosynthesis. In terms of biological role, catalyzes the condensation reaction of fatty acid synthesis by the addition to an acyl acceptor of two carbons from malonyl-ACP. Catalyzes the first condensation reaction which initiates fatty acid synthesis and may therefore play a role in governing the total rate of fatty acid production. Possesses both acetoacetyl-ACP synthase and acetyl transacylase activities. Its substrate specificity determines the biosynthesis of branched-chain and/or straight-chain of fatty acids. This chain is Beta-ketoacyl-[acyl-carrier-protein] synthase III, found in Chlorobium phaeobacteroides (strain DSM 266 / SMG 266 / 2430).